The primary structure comprises 695 residues: DSC E3 ubiquitin ligase complex subunit 1 (695 aa).

The first 25 residues, 1-25 (MDRRRWVPSTPVVTLLLLFMLFAPA), serve as a signal peptide directing secretion. The Lumenal segment spans residues 26-319 (PRLPSRNGES…KGPRNFVLEN (294 aa)). The chain crosses the membrane as a helical span at residues 320-340 (HLVRFSSLYIFIVLSQIFVLL). Residues 341-353 (RQMRINSPSHVQR) are Cytoplasmic-facing. Residues 354-374 (LSFLTIAMQAGLDAYIAIFFL) traverse the membrane as a helical segment. The Lumenal portion of the chain corresponds to 375–382 (STNAVIEK). A helical membrane pass occupies residues 383–403 (GYLPFVSVAFLSLVPSVMFTM). Residues 404–486 (RYLALILRVQ…QRDWSAVCLR (83 aa)) are Cytoplasmic-facing. The tract at residues 419 to 473 (PPAPRPVTNNSSNNNTNQSNASNENSPNAPSAANDNTETTTVNPPQEDDQPMTQH) is disordered. Residues 427–454 (NNSSNNNTNQSNASNENSPNAPSAANDN) are compositionally biased toward low complexity. A helical transmembrane segment spans residues 487-507 (FYFIILVVCIASLYSAFWPVI). The Lumenal segment spans residues 508–509 (YR). The helical transmembrane segment at 510–530 (FYFISALIFTSYSFWIPQIIQ) threads the bilayer. Residues 531 to 540 (NVKQGTSRSF) lie on the Cytoplasmic side of the membrane. A helical membrane pass occupies residues 541-561 (TWTYILGASVLRLYLPLAIFI). The Lumenal portion of the chain corresponds to 562–572 (DSELILGFPPK). A helical transmembrane segment spans residues 573–593 (YFFALGLVLWMLFQVLVLLVQ). Residues 594–695 (DTLGPRFFLP…PVCRCHLPAV (102 aa)) are Cytoplasmic-facing. An RING-type; atypical zinc finger spans residues 634–689 (CPICMQPIELVSTGSTLNPASMMVRRNYMLTPCHHLYHRQCLLQWMETRSICPVCR).

As to quaternary structure, component of the DSC E3 ubiquitin ligase complex composed of dsc1, dsc2, dsc3 and dsc4.

Its subcellular location is the endoplasmic reticulum membrane. The protein resides in the golgi apparatus membrane. It carries out the reaction S-ubiquitinyl-[E2 ubiquitin-conjugating enzyme]-L-cysteine + [acceptor protein]-L-lysine = [E2 ubiquitin-conjugating enzyme]-L-cysteine + N(6)-ubiquitinyl-[acceptor protein]-L-lysine.. It functions in the pathway protein modification; protein ubiquitination. Functionally, catalytic component of the DSC E3 ubiquitin ligase complex which is required for the sre1 transcriptional activator proteolytic cleavage to release the soluble transcription factor from the membrane in low oxygen or sterol conditions. The complex also plays an important role in the multivesicular body (MVB) pathway and functions in a post-endoplasmic reticulum pathway for protein degradation. This is DSC E3 ubiquitin ligase complex subunit 1 (dsc1) from Schizosaccharomyces pombe (strain 972 / ATCC 24843) (Fission yeast).